The following is a 1167-amino-acid chain: Pesticidal crystal protein Cry1Ja (1167 aa).

The protein belongs to the delta endotoxin family.

Its function is as follows. Promotes colloidosmotic lysis by binding to the midgut epithelial cells of many lepidopteran larvae. This chain is Pesticidal crystal protein Cry1Ja (cry1Ja), found in Bacillus thuringiensis.